A 122-amino-acid polypeptide reads, in one-letter code: Small ribosomal subunit protein uS13 (122 aa).

A disordered region spans residues 93–122 (RLSLPVRGQRTKTNSRTRKGKRKTVAGKKK). The span at 101 to 122 (QRTKTNSRTRKGKRKTVAGKKK) shows a compositional bias: basic residues.

Belongs to the universal ribosomal protein uS13 family. As to quaternary structure, part of the 30S ribosomal subunit. Forms a loose heterodimer with protein S19. Forms two bridges to the 50S subunit in the 70S ribosome.

Located at the top of the head of the 30S subunit, it contacts several helices of the 16S rRNA. In the 70S ribosome it contacts the 23S rRNA (bridge B1a) and protein L5 of the 50S subunit (bridge B1b), connecting the 2 subunits; these bridges are implicated in subunit movement. Contacts the tRNAs in the A and P-sites. This Chlamydia caviae (strain ATCC VR-813 / DSM 19441 / 03DC25 / GPIC) (Chlamydophila caviae) protein is Small ribosomal subunit protein uS13.